The primary structure comprises 244 residues: Protein-lysine methyltransferase METTL21E (244 aa).

Residues 1 to 20 form a disordered region; that stretch reads MDLTVTHITHKETYKEPRDD. The segment covering 9 to 18 has biased composition (basic and acidic residues); the sequence is THKETYKEPR. S-adenosyl-L-methionine is bound by residues Trp-69, 97–99, Asp-118, Trp-149, and Ala-170; that span reads GAG.

Belongs to the methyltransferase superfamily. METTL21 family.

Its function is as follows. Protein-lysine methyltransferase. This chain is Protein-lysine methyltransferase METTL21E (Mettl21e), found in Mus musculus (Mouse).